The primary structure comprises 389 residues: Tyrosine aminotransferase (389 aa).

The residue at position 242 (K242) is an N6-(pyridoxal phosphate)lysine.

This sequence belongs to the class-I pyridoxal-phosphate-dependent aminotransferase family. In terms of assembly, homodimer. Pyridoxal 5'-phosphate serves as cofactor.

The catalysed reaction is L-tyrosine + 2-oxoglutarate = 3-(4-hydroxyphenyl)pyruvate + L-glutamate. The protein operates within amino-acid degradation; L-phenylalanine degradation; acetoacetate and fumarate from L-phenylalanine: step 2/6. Transaminase involved in tyrosine breakdown. Converts tyrosine to p-hydroxyphenylpyruvate. The sequence is that of Tyrosine aminotransferase (tatA) from Rhizobium meliloti (strain 1021) (Ensifer meliloti).